The chain runs to 4841 residues: Nonribosomal peptide synthetase 2 (4841 aa).

Positions Val-26–Leu-429 are adenylation 1. The 74-residue stretch at Glu-531–Ile-604 folds into the Carrier 1 domain. At Ser-565 the chain carries O-(pantetheine 4'-phosphoryl)serine. A condensation 1 region spans residues Glu-640 to Lys-1042. The interval Phe-1072–Arg-1463 is adenylation 2. The region spanning Glu-1587–Pro-1665 is the Carrier 2 domain. At Ser-1625 the chain carries O-(pantetheine 4'-phosphoryl)serine. The segment at Ile-1702–Ser-2043 is condensation 2. Positions Ser-2139 to Arg-2212 constitute a Carrier 3 domain. Position 2173 is an O-(pantetheine 4'-phosphoryl)serine (Ser-2173). A condensation 3 region spans residues Ala-2248–Phe-2663. An adenylation 3 region spans residues Ala-2695 to Arg-3090. Residues Gln-3219–Ala-3293 enclose the Carrier 4 domain. Ser-3253 is modified (O-(pantetheine 4'-phosphoryl)serine). A condensation 4 region spans residues Ile-3333–Glu-3735. The 80-residue stretch at Gln-3759 to Thr-3838 folds into the Carrier 5 domain. Position 3799 is an O-(pantetheine 4'-phosphoryl)serine (Ser-3799). The tract at residues Ser-3873–Leu-4242 is condensation 5. Residues Ile-4318–Leu-4394 form the Carrier 6 domain. Ser-4355 is modified (O-(pantetheine 4'-phosphoryl)serine). The condensation 6 stretch occupies residues Glu-4430–Arg-4726.

This sequence belongs to the NRP synthetase family.

The protein operates within siderophore biosynthesis. Its function is as follows. Nonribosomal peptide synthetase; part of the gene cluster that mediates the biosynthesis of hydroxamate-containing siderophores that play a critical role in virulence. Gibberella zeae produces extracellular coprogen-type siderophores as well as the intracellular siderophore ferricrocin. The role of extracellular siderophores is to supply iron to the fungus during plant infection, and the intracellular ferricrocin is required for intracellular iron distribution and storage with a crucial role in ascus and ascospore development. SID1 catalyzes the conversion of L-ornithine to N(5)-hydroxyornithine, the first step in the biosynthesis of all hydroxamate-containing siderophores. The assembly of extracellular coprogen-type siderophores is performed by the nonribosomal peptide synthetase (NRPS) NPS6 whereas the intracellular siderophore ferricrocin is assembled by NPS2. The sequence is that of Nonribosomal peptide synthetase 2 from Gibberella zeae (strain ATCC MYA-4620 / CBS 123657 / FGSC 9075 / NRRL 31084 / PH-1) (Wheat head blight fungus).